Here is a 352-residue protein sequence, read N- to C-terminus: Holliday junction branch migration complex subunit RuvB (352 aa).

The segment at 1–26 is disordered; that stretch reads MIETDKLRAAAPERLISPQPADRQED. Residues 4–193 are large ATPase domain (RuvB-L); sequence TDKLRAAAPE…FGIVSRLEFY (190 aa). ATP-binding positions include L32, R33, G74, K77, T78, T79, 140–142, R183, Y193, and R230; that span reads EDF. T78 contributes to the Mg(2+) binding site. A small ATPAse domain (RuvB-S) region spans residues 194 to 264; sequence TPDELGFIVS…VADAALRMLD (71 aa). The segment at 267-352 is head domain (RuvB-H); sequence SLGLDLMDRK…RPGGTDLFGG (86 aa). DNA contacts are provided by R322 and R327.

This sequence belongs to the RuvB family. In terms of assembly, homohexamer. Forms an RuvA(8)-RuvB(12)-Holliday junction (HJ) complex. HJ DNA is sandwiched between 2 RuvA tetramers; dsDNA enters through RuvA and exits via RuvB. An RuvB hexamer assembles on each DNA strand where it exits the tetramer. Each RuvB hexamer is contacted by two RuvA subunits (via domain III) on 2 adjacent RuvB subunits; this complex drives branch migration. In the full resolvosome a probable DNA-RuvA(4)-RuvB(12)-RuvC(2) complex forms which resolves the HJ.

Its subcellular location is the cytoplasm. It catalyses the reaction ATP + H2O = ADP + phosphate + H(+). Its function is as follows. The RuvA-RuvB-RuvC complex processes Holliday junction (HJ) DNA during genetic recombination and DNA repair, while the RuvA-RuvB complex plays an important role in the rescue of blocked DNA replication forks via replication fork reversal (RFR). RuvA specifically binds to HJ cruciform DNA, conferring on it an open structure. The RuvB hexamer acts as an ATP-dependent pump, pulling dsDNA into and through the RuvAB complex. RuvB forms 2 homohexamers on either side of HJ DNA bound by 1 or 2 RuvA tetramers; 4 subunits per hexamer contact DNA at a time. Coordinated motions by a converter formed by DNA-disengaged RuvB subunits stimulates ATP hydrolysis and nucleotide exchange. Immobilization of the converter enables RuvB to convert the ATP-contained energy into a lever motion, pulling 2 nucleotides of DNA out of the RuvA tetramer per ATP hydrolyzed, thus driving DNA branch migration. The RuvB motors rotate together with the DNA substrate, which together with the progressing nucleotide cycle form the mechanistic basis for DNA recombination by continuous HJ branch migration. Branch migration allows RuvC to scan DNA until it finds its consensus sequence, where it cleaves and resolves cruciform DNA. This chain is Holliday junction branch migration complex subunit RuvB, found in Azoarcus sp. (strain BH72).